Here is a 179-residue protein sequence, read N- to C-terminus: Large ribosomal subunit protein uL5 (179 aa).

The protein belongs to the universal ribosomal protein uL5 family. In terms of assembly, part of the 50S ribosomal subunit; part of the 5S rRNA/L5/L18/L25 subcomplex. Contacts the 5S rRNA and the P site tRNA. Forms a bridge to the 30S subunit in the 70S ribosome.

In terms of biological role, this is one of the proteins that bind and probably mediate the attachment of the 5S RNA into the large ribosomal subunit, where it forms part of the central protuberance. In the 70S ribosome it contacts protein S13 of the 30S subunit (bridge B1b), connecting the 2 subunits; this bridge is implicated in subunit movement. Contacts the P site tRNA; the 5S rRNA and some of its associated proteins might help stabilize positioning of ribosome-bound tRNAs. The chain is Large ribosomal subunit protein uL5 from Alkalilimnicola ehrlichii (strain ATCC BAA-1101 / DSM 17681 / MLHE-1).